Reading from the N-terminus, the 241-residue chain is Carboxy-S-adenosyl-L-methionine synthase (241 aa).

Residues Y38, 63-65 (GCS), 88-89 (DN), 116-117 (DI), N131, and R198 each bind S-adenosyl-L-methionine.

Belongs to the class I-like SAM-binding methyltransferase superfamily. Cx-SAM synthase family. Homodimer.

The enzyme catalyses prephenate + S-adenosyl-L-methionine = carboxy-S-adenosyl-L-methionine + 3-phenylpyruvate + H2O. In terms of biological role, catalyzes the conversion of S-adenosyl-L-methionine (SAM) to carboxy-S-adenosyl-L-methionine (Cx-SAM). The chain is Carboxy-S-adenosyl-L-methionine synthase from Haemophilus influenzae (strain PittGG).